The primary structure comprises 339 residues: NADH-quinone oxidoreductase subunit H (339 aa).

The next 8 helical transmembrane spans lie at 19 to 39 (LLKI…LTLA), 87 to 107 (FLLG…VVPF), 120 to 140 (LLYI…AGWA), 153 to 173 (SAAQ…GVLM), 191 to 211 (FWEW…ISAV), 253 to 273 (ILVA…PVPF), 275 to 295 (PDSI…FLWF), and 310 to 330 (LGWK…GAMM).

Belongs to the complex I subunit 1 family. In terms of assembly, NDH-1 is composed of 14 different subunits. Subunits NuoA, H, J, K, L, M, N constitute the membrane sector of the complex.

The protein localises to the cell inner membrane. The catalysed reaction is a quinone + NADH + 5 H(+)(in) = a quinol + NAD(+) + 4 H(+)(out). In terms of biological role, NDH-1 shuttles electrons from NADH, via FMN and iron-sulfur (Fe-S) centers, to quinones in the respiratory chain. The immediate electron acceptor for the enzyme in this species is believed to be ubiquinone. Couples the redox reaction to proton translocation (for every two electrons transferred, four hydrogen ions are translocated across the cytoplasmic membrane), and thus conserves the redox energy in a proton gradient. This subunit may bind ubiquinone. In Methylobacillus flagellatus (strain ATCC 51484 / DSM 6875 / VKM B-1610 / KT), this protein is NADH-quinone oxidoreductase subunit H.